A 284-amino-acid polypeptide reads, in one-letter code: Tropomyosin beta chain (284 aa).

N-acetylmethionine is present on Met-1. The segment at 1-65 (MDAIKKKMQM…EVEKYSESVK (65 aa)) is disordered. Residues 1 to 284 (MDAIKKKMQM…DNALNDITSL (284 aa)) are a coiled coil. Composition is skewed to basic and acidic residues over residues 12-40 (KLDK…KQLE) and 51-65 (KGTE…ESVK). Thr-53 bears the Phosphothreonine mark. Ser-61 is subject to Phosphoserine; by PIK3CG. Residue Thr-79 is modified to Phosphothreonine. A Phosphoserine modification is found at Ser-87. Position 108 is a phosphothreonine (Thr-108). The tract at residues 117 to 136 (EKAADESERGMKVIENRAMK) is disordered. Ser-158, Ser-206, and Ser-215 each carry phosphoserine. Thr-252 is modified (phosphothreonine). The residue at position 261 (Tyr-261) is a Phosphotyrosine. At Ser-271 the chain carries Phosphoserine. Thr-282 is modified (phosphothreonine). Ser-283 carries the phosphoserine modification.

Belongs to the tropomyosin family. As to quaternary structure, homodimer. Heterodimer of an alpha (TPM1, TPM3 or TPM4) and a beta (TPM2) chain. Phosphorylated on Ser-61 by PIK3CG. Phosphorylation on Ser-61 is required for ADRB2 internalization. In terms of tissue distribution, present in primary breast cancer tissue, absent from normal breast tissue.

It localises to the cytoplasm. It is found in the cytoskeleton. Functionally, binds to actin filaments in muscle and non-muscle cells. Plays a central role, in association with the troponin complex, in the calcium dependent regulation of vertebrate striated muscle contraction. Smooth muscle contraction is regulated by interaction with caldesmon. In non-muscle cells is implicated in stabilizing cytoskeleton actin filaments. The non-muscle isoform may have a role in agonist-mediated receptor internalization. The chain is Tropomyosin beta chain (TPM2) from Homo sapiens (Human).